We begin with the raw amino-acid sequence, 83 residues long: uncharacterized protein (83 aa).

Residues 50–70 (IMVFLGEAWIILIPFAIFCII) form a helical membrane-spanning segment.

The protein belongs to the plectrovirus ORF7 family.

It is found in the host membrane. This is an uncharacterized protein from Spiroplasma melliferum (SpV1).